Consider the following 277-residue polypeptide: S-formylglutathione hydrolase FrmB (277 aa).

Catalysis depends on charge relay system residues serine 145, aspartate 221, and histidine 254.

It belongs to the esterase D family.

It catalyses the reaction S-formylglutathione + H2O = formate + glutathione + H(+). In terms of biological role, serine hydrolase involved in the detoxification of formaldehyde. Hydrolyzes S-formylglutathione to glutathione and formate. The chain is S-formylglutathione hydrolase FrmB (frmB) from Escherichia coli O9:H4 (strain HS).